Reading from the N-terminus, the 217-residue chain is UPF0502 protein KPN78578_10500 (217 aa).

Belongs to the UPF0502 family.

This chain is UPF0502 protein KPN78578_10500, found in Klebsiella pneumoniae subsp. pneumoniae (strain ATCC 700721 / MGH 78578).